Consider the following 305-residue polypeptide: Ornithine carbamoyltransferase (305 aa).

Carbamoyl phosphate contacts are provided by residues 48-51 (STRT), arginine 99, and 126-129 (HPCQ). L-ornithine-binding positions include asparagine 157, aspartate 222, and 226 to 227 (SM). Carbamoyl phosphate-binding positions include 262 to 263 (CL) and arginine 290.

Belongs to the aspartate/ornithine carbamoyltransferase superfamily. OTCase family.

It is found in the cytoplasm. It carries out the reaction carbamoyl phosphate + L-ornithine = L-citrulline + phosphate + H(+). It participates in amino-acid biosynthesis; L-arginine biosynthesis; L-arginine from L-ornithine and carbamoyl phosphate: step 1/3. Its function is as follows. Reversibly catalyzes the transfer of the carbamoyl group from carbamoyl phosphate (CP) to the N(epsilon) atom of ornithine (ORN) to produce L-citrulline. The polypeptide is Ornithine carbamoyltransferase (argF) (Methanocaldococcus jannaschii (strain ATCC 43067 / DSM 2661 / JAL-1 / JCM 10045 / NBRC 100440) (Methanococcus jannaschii)).